A 734-amino-acid polypeptide reads, in one-letter code: Diacylglycerol kinase alpha (734 aa).

2 consecutive EF-hand domains span residues 109 to 144 and 154 to 189; these read RPED…MMRM and ELRP…TVPL. Ca(2+) contacts are provided by D122, D124, N126, E133, D167, D169, S171, S173, and E178. 2 consecutive Phorbol-ester/DAG-type zinc fingers follow at residues 204–252 and 268–318; these read QHMW…ALPC and THVW…GHEC. Residues 358 to 505 are necessary and sufficient for the diacylglycerol kinase activity; sequence NLSTSEALRI…MDRWSVEVIP (148 aa). The 135-residue stretch at 371 to 505 folds into the DAGKc domain; that stretch reads SNTHPLLVFV…MDRWSVEVIP (135 aa). K483 is subject to N6-acetyllysine.

It belongs to the eukaryotic diacylglycerol kinase family. Monomer.

Its subcellular location is the cytoplasm. The protein resides in the cytosol. The enzyme catalyses a 1,2-diacyl-sn-glycerol + ATP = a 1,2-diacyl-sn-glycero-3-phosphate + ADP + H(+). The catalysed reaction is a 1-O-alkyl-sn-glycerol + ATP = a 1-O-alkyl-sn-glycero-3-phosphate + ADP + H(+). It carries out the reaction 1-O-alkyl-2-acyl-sn-glycerol + ATP = 1-O-alkyl-2-acyl-sn-glycero-3-phosphate + ADP + H(+). It catalyses the reaction 1,2-dihexadecanoyl-sn-glycerol + ATP = 1,2-dihexadecanoyl-sn-glycero-3-phosphate + ADP + H(+). The enzyme catalyses 1-hexadecanoyl-2-(9Z-octadecenoyl)-sn-glycerol + ATP = 1-hexadecanoyl-2-(9Z-octadecenoyl)-sn-glycero-3-phosphate + ADP + H(+). The catalysed reaction is 2-(9Z-octadecenoyl)-glycerol + ATP = 2-(9Z-octadecenoyl)-sn-glycero-3-phosphate + ADP + H(+). It carries out the reaction 1,2-di-(9Z-octadecenoyl)-sn-glycerol + ATP = 1,2-di-(9Z-octadecenoyl)-sn-glycero-3-phosphate + ADP + H(+). It catalyses the reaction 1-octadecanoyl-2-(5Z,8Z,11Z,14Z-eicosatetraenoyl)-sn-glycerol + ATP = 1-octadecanoyl-2-(5Z,8Z,11Z,14Z-eicosatetraenoyl)-sn-glycero-3-phosphate + ADP + H(+). The enzyme catalyses 1,2-didecanoyl-sn-glycerol + ATP = 1,2-didecanoyl-sn-glycero-3-phosphate + ADP + H(+). The catalysed reaction is 1-O-hexadecyl-2-acetyl-sn-glycerol + ATP = 1-O-hexadecyl-2-acetyl-sn-glycero-3-phosphate + ADP + H(+). It carries out the reaction 1-O-hexadecyl-2-(5Z,8Z,11Z,14Z-eicosatetraenoyl)-sn-glycerol + ATP = 1-O-hexadecyl-2-(5Z,8Z,11Z,14Z-eicosatetraenoyl)-sn-glycero-3-phosphate + ADP + H(+). It catalyses the reaction 1-O-hexadecyl-2-(9Z-octadecenoyl)-sn-glycerol + ATP = 1-O-hexadecyl-2-(9Z-octadecenoyl)-sn-glycero-3-phosphate + ADP + H(+). The enzyme catalyses 1-O-hexadecyl-sn-glycerol + ATP = 1-O-hexadecyl-sn-glycero-3-phosphate + ADP + H(+). The protein operates within lipid metabolism; glycerolipid metabolism. Its activity is regulated as follows. Stimulated by calcium and phosphatidylserine. Diacylglycerol kinase that converts diacylglycerol/DAG into phosphatidic acid/phosphatidate/PA and regulates the respective levels of these two bioactive lipids. Thereby, acts as a central switch between the signaling pathways activated by these second messengers with different cellular targets and opposite effects in numerous biological processes. Also plays an important role in the biosynthesis of complex lipids. Can also phosphorylate 1-alkyl-2-acylglycerol in vitro as efficiently as diacylglycerol provided it contains an arachidonoyl group. Also involved in the production of alkyl-lysophosphatidic acid, another bioactive lipid, through the phosphorylation of 1-alkyl-2-acetyl glycerol. This Sus scrofa (Pig) protein is Diacylglycerol kinase alpha (DGKA).